Consider the following 864-residue polypeptide: Leucine--tRNA ligase (864 aa).

A 'HIGH' region motif is present at residues 47–57 (PYPSGNLHMGH). Residues 298 to 317 (SEQDRVADDRPKRGVATGGT) form a disordered region. Over residues 299 to 309 (EQDRVADDRPK) the composition is skewed to basic and acidic residues. Positions 622 to 626 (KMSKS) match the 'KMSKS' region motif. Position 625 (K625) interacts with ATP.

Belongs to the class-I aminoacyl-tRNA synthetase family.

It is found in the cytoplasm. The catalysed reaction is tRNA(Leu) + L-leucine + ATP = L-leucyl-tRNA(Leu) + AMP + diphosphate. The chain is Leucine--tRNA ligase from Synechococcus sp. (strain RCC307).